The primary structure comprises 471 residues: UDP-N-acetylmuramoylalanine--D-glutamate ligase (471 aa).

ATP is bound at residue 135 to 141 (GTNGKTT).

The protein belongs to the MurCDEF family.

The protein resides in the cytoplasm. The catalysed reaction is UDP-N-acetyl-alpha-D-muramoyl-L-alanine + D-glutamate + ATP = UDP-N-acetyl-alpha-D-muramoyl-L-alanyl-D-glutamate + ADP + phosphate + H(+). The protein operates within cell wall biogenesis; peptidoglycan biosynthesis. Cell wall formation. Catalyzes the addition of glutamate to the nucleotide precursor UDP-N-acetylmuramoyl-L-alanine (UMA). The polypeptide is UDP-N-acetylmuramoylalanine--D-glutamate ligase (Frankia casuarinae (strain DSM 45818 / CECT 9043 / HFP020203 / CcI3)).